A 357-amino-acid chain; its full sequence is G-protein coupled receptor 183 (357 aa).

At 1-27 (MANNFTTPLATSHGNNCDLYAHHSTAR) the chain is on the extracellular side. The N-linked (GlcNAc...) asparagine glycan is linked to Asn-4. A helical transmembrane segment spans residues 28 to 53 (VLMPLHYSLVFIIGLVGNLLALVVIV). Residues 54–73 (QNRKKINSTTLYSMNLVISD) are Cytoplasmic-facing. Residues 74–91 (ILFTTALPTRIAYYALGF) traverse the membrane as a helical segment. Arg-83 provides a ligand contact to 7alpha,25-dihydroxycholesterol. Residues 92–101 (DWRIGDALCR) are Extracellular-facing. Cys-100 and Cys-177 are disulfide-bonded. A helical transmembrane segment spans residues 102-123 (VTALVFYINTYAGVNFMTCLSI). 7alpha,25-dihydroxycholesterol-binding residues include Tyr-108 and Tyr-112. The segment at 122-130 (SIDRFFAVV) is interaction with G proteins. The Cytoplasmic segment spans residues 124 to 145 (DRFFAVVHPLRYNKIKRIEYAK). Residues 146–164 (GVCLSVWILVFAQTLPLLL) form a helical membrane-spanning segment. Residues 165–188 (TPMSKEEGDKTTCMEYPNFEGTAS) lie on the Extracellular side of the membrane. Residues 189 to 211 (LPWILLGACLLGYVLPITVILLC) traverse the membrane as a helical segment. At 212–237 (YSQICCKLFRTAKQNPLTEKSGVNKK) the chain is on the cytoplasmic side. The chain crosses the membrane as a helical span at residues 238 to 261 (ALNTIILIIVVFILCFTPYHVAII). Tyr-256 contributes to the 7alpha,25-dihydroxycholesterol binding site. Over 262–283 (QHMIKMLCSPGALECGARHSFQ) the chain is Extracellular. The chain crosses the membrane as a helical span at residues 284–308 (ISLHFTVCLMNFNCCMDPFIYFFAC). Residues 309-357 (KGYKRKVMKMLKRQVSVSISSAVRSAPEENSREMTESQMMIHSKASNGR) lie on the Cytoplasmic side of the membrane. Residues Ser-324 and Ser-345 each carry the phosphoserine modification. A disordered region spans residues 336–357 (EENSREMTESQMMIHSKASNGR). A compositionally biased stretch (polar residues) spans 344–357 (ESQMMIHSKASNGR).

It belongs to the G-protein coupled receptor 1 family. Homodimer and heterodimer. Heterodimerizes with CXCR5; leading to modulate the interaction between of CXCL13 and CXCR5. As to expression, expressed in mature B-cells and increases in expression early after activation, before being down-regulated in germinal center B-cells. Expressed in astrocytes. Specifically expressed in CD4(+) dendritic cells but not in CD8(+) dendritic cells. Expressed in monocyte/osteoclasts precursors and mature osteoclasts.

The protein resides in the cell membrane. In terms of biological role, G-protein coupled receptor expressed in lymphocytes that acts as a chemotactic receptor for B-cells, T-cells, splenic dendritic cells, monocytes/macrophages and astrocytes. Receptor for oxysterol 7-alpha,25-dihydroxycholesterol (7-alpha,25-OHC) and other related oxysterols. Mediates cell positioning and movement of a number of cells by binding the 7-alpha,25-OHC ligand that forms a chemotactic gradient. Binding of 7-alpha,25-OHC mediates the correct localization of B-cells during humoral immune responses. Collaborates with CXCR5 to mediate B-cell migration; probably by forming a heterodimer with CXCR5 that affects the interaction between of CXCL13 and CXCR5. Guides B-cell movement along the B-cell zone-T-cell zone boundary and later to interfollicular and outer follicular regions. Its specific expression during B-cell maturation helps position B-cells appropriately for mounting T-dependent antibody responses. Also acts as a chemotactic receptor for some T-cells upon binding to 7-alpha,25-OHC ligand. Promotes follicular helper T (Tfh) cells differentiation by positioning activated T-cells at the follicle-T-zone interface, promoting contact of newly activated CD4 T-cells with activated dendritic cells and exposing them to Tfh-cell-promoting inducible costimulator (ICOS) ligand. Expression in splenic dendritic cells is required for their homeostasis, localization and ability to induce B- and T-cell responses: GPR183 acts as a chemotactic receptor in dendritic cells that mediates the accumulation of CD4(+) dendritic cells in bridging channels. Regulates migration of astrocytes and is involved in communication between astrocytes and macrophages. Promotes osteoclast precursor migration to bone surfaces. Signals constitutively through G(i)-alpha, but not G(s)-alpha or G(q)-alpha. Signals constitutively also via MAPK1/3 (ERK1/2). This Mus musculus (Mouse) protein is G-protein coupled receptor 183.